The primary structure comprises 356 residues: DNA polymerase IV (356 aa).

A UmuC domain is found at 6-187; it reads IIHIDMDYFF…LDIGDFPGVG (182 aa). Positions 10 and 105 each coordinate Mg(2+). The active site involves glutamate 106.

The protein belongs to the DNA polymerase type-Y family. As to quaternary structure, monomer. The cofactor is Mg(2+).

It localises to the cytoplasm. It catalyses the reaction DNA(n) + a 2'-deoxyribonucleoside 5'-triphosphate = DNA(n+1) + diphosphate. Poorly processive, error-prone DNA polymerase involved in untargeted mutagenesis. Copies undamaged DNA at stalled replication forks, which arise in vivo from mismatched or misaligned primer ends. These misaligned primers can be extended by PolIV. Exhibits no 3'-5' exonuclease (proofreading) activity. May be involved in translesional synthesis, in conjunction with the beta clamp from PolIII. In Staphylococcus epidermidis (strain ATCC 12228 / FDA PCI 1200), this protein is DNA polymerase IV.